A 258-amino-acid polypeptide reads, in one-letter code: Ribosomal RNA small subunit methyltransferase A (258 aa).

Residues His13, Leu15, Gly40, Glu61, Asp85, and Asn106 each coordinate S-adenosyl-L-methionine.

This sequence belongs to the class I-like SAM-binding methyltransferase superfamily. rRNA adenine N(6)-methyltransferase family. RsmA subfamily.

The protein localises to the cytoplasm. The catalysed reaction is adenosine(1518)/adenosine(1519) in 16S rRNA + 4 S-adenosyl-L-methionine = N(6)-dimethyladenosine(1518)/N(6)-dimethyladenosine(1519) in 16S rRNA + 4 S-adenosyl-L-homocysteine + 4 H(+). Specifically dimethylates two adjacent adenosines (A1518 and A1519) in the loop of a conserved hairpin near the 3'-end of 16S rRNA in the 30S particle. May play a critical role in biogenesis of 30S subunits. The sequence is that of Ribosomal RNA small subunit methyltransferase A from Porphyromonas gingivalis (strain ATCC 33277 / DSM 20709 / CIP 103683 / JCM 12257 / NCTC 11834 / 2561).